The following is a 473-amino-acid chain: Cyprosin (473 aa).

A propeptide spans 1-33 (activation peptide); that stretch reads LKKRKVNILNHPGEHAGSNDANARRKYGVRGNF. The Peptidase A1 domain occupies 51–470; sequence YFGEIGIGTP…DYGNLRVGFA (420 aa). D69 is a catalytic residue. Intrachain disulfides connect C82–C88 and C247–C251. The active site involves D256. The Saposin B-type domain occupies 281 to 384; the sequence is VMSQQCKSLV…DKLCERLPSP (104 aa). 4 cysteine pairs are disulfide-bonded: C286/C378, C311/C350, C317/C347, and C392/C429. N364 carries an N-linked (GlcNAc...) asparagine glycan.

Belongs to the peptidase A1 family. As to expression, mostly present in the violet parts of styles and corollas of mature flowers.

This chain is Cyprosin (CYPRO1), found in Cynara cardunculus (Cardoon).